A 319-amino-acid polypeptide reads, in one-letter code: Putative ribose-phosphate pyrophosphokinase 2 (319 aa).

Residues 40–42 and 99–100 each bind ATP; these read DGE and RQ. His-133 provides a ligand contact to Mg(2+). D-ribose 5-phosphate contacts are provided by residues Asp-222 and 226-230; that span reads NTGRT.

Belongs to the ribose-phosphate pyrophosphokinase family. Class I subfamily. As to quaternary structure, homohexamer. Requires Mg(2+) as cofactor.

It localises to the cytoplasm. It catalyses the reaction D-ribose 5-phosphate + ATP = 5-phospho-alpha-D-ribose 1-diphosphate + AMP + H(+). It participates in metabolic intermediate biosynthesis; 5-phospho-alpha-D-ribose 1-diphosphate biosynthesis; 5-phospho-alpha-D-ribose 1-diphosphate from D-ribose 5-phosphate (route I): step 1/1. Functionally, involved in the biosynthesis of the central metabolite phospho-alpha-D-ribosyl-1-pyrophosphate (PRPP) via the transfer of pyrophosphoryl group from ATP to 1-hydroxyl of ribose-5-phosphate (Rib-5-P). The protein is Putative ribose-phosphate pyrophosphokinase 2 of Streptococcus pneumoniae serotype 4 (strain ATCC BAA-334 / TIGR4).